Consider the following 256-residue polypeptide: Floral homeotic protein APETALA 1 (256 aa).

Positions 1–61 constitute an MADS-box domain; sequence MGRGRVQLKR…GKLFEYSTDS (61 aa). The region spanning 88 to 178 is the K-box domain; the sequence is NTNWSMEYNR…SKQIKEREKV (91 aa). The interval 180-206 is disordered; that stretch reads RAQQEQWDQQNHGQNMPPPPPPQEHQI.

Homodimer capable of binding to CArG-box sequences.

The protein localises to the nucleus. In terms of biological role, transcription factor that promotes early floral meristem identity in synergy with LEAFY. Displays a redundant function with CAULIFLOWER in the up-regulation of LEAFY. Required subsequently for the transition of an inflorescence meristem into a floral meristem, and for the normal development of sepals and petals in flowers. Regulates positively B class homeotic proteins. The protein is Floral homeotic protein APETALA 1 (AP1) of Brassica rapa subsp. pekinensis (Chinese cabbage).